A 420-amino-acid polypeptide reads, in one-letter code: Pre-mRNA-splicing factor RBM22 (420 aa).

At Ala2 the chain carries N-acetylalanine. 2 positions are modified to phosphoserine: Ser4 and Ser102. Residues Lys139 and Lys149 each participate in a glycyl lysine isopeptide (Lys-Gly) (interchain with G-Cter in SUMO2) cross-link. The C3H1-type zinc finger occupies 159–186 (RNRPHICSFWVKGECKRGEECPYRHEKP). An N6-acetyllysine modification is found at Lys212. Residues 232–305 (TTLYVGGLGD…RRLNVKWGRS (74 aa)) form the RRM domain. Lys290 participates in a covalent cross-link: Glycyl lysine isopeptide (Lys-Gly) (interchain with G-Cter in SUMO2). Disordered stretches follow at residues 303-343 (GRSQ…AAEE) and 371-420 (IAPP…HSSP). Positions 309 to 318 (RGKEKEKDGT) are enriched in basic and acidic residues.

The protein belongs to the SLT11 family. Component of the pre-catalytic and catalytic spliceosome complexes. Component of the postcatalytic spliceosome P complex. Interacts with PDCD6; the interaction induces translocation of PDCD6 in the cytoplasm. Interacts with PPIL1.

It localises to the nucleus. The protein resides in the cytoplasm. Functionally, required for pre-mRNA splicing as component of the activated spliceosome. Involved in the first step of pre-mRNA splicing. Binds directly to the internal stem-loop (ISL) domain of the U6 snRNA and to the pre-mRNA intron near the 5' splice site during the activation and catalytic phases of the spliceosome cycle. Involved in both translocations of the nuclear SLU7 to the cytoplasm and the cytosolic calcium-binding protein PDCD6 to the nucleus upon cellular stress responses. In Rattus norvegicus (Rat), this protein is Pre-mRNA-splicing factor RBM22 (Rbm22).